A 951-amino-acid chain; its full sequence is Valine--tRNA ligase (951 aa).

The 'HIGH' region signature appears at Pro42–His52. Positions Lys554–Ser558 match the 'KMSKS' region motif. Lys557 is an ATP binding site. Residues Leu882 to Gln944 adopt a coiled-coil conformation.

This sequence belongs to the class-I aminoacyl-tRNA synthetase family. ValS type 1 subfamily. As to quaternary structure, monomer.

It localises to the cytoplasm. It carries out the reaction tRNA(Val) + L-valine + ATP = L-valyl-tRNA(Val) + AMP + diphosphate. Its function is as follows. Catalyzes the attachment of valine to tRNA(Val). As ValRS can inadvertently accommodate and process structurally similar amino acids such as threonine, to avoid such errors, it has a 'posttransfer' editing activity that hydrolyzes mischarged Thr-tRNA(Val) in a tRNA-dependent manner. This is Valine--tRNA ligase from Salmonella choleraesuis (strain SC-B67).